Here is a 143-residue protein sequence, read N- to C-terminus: EKC/KEOPS complex subunit LAGE3 (143 aa).

The tract at residues 1–57 is disordered; that stretch reads MRDADADAGGGADGGDGRGGHSCRGGVDTAAAPAGGAPPAHAPGPGRDAASAARGSR. A compositionally biased stretch (low complexity) spans 30 to 55; it reads AAAPAGGAPPAHAPGPGRDAASAARG.

Belongs to the CTAG/PCC1 family. As to quaternary structure, component of the EKC/KEOPS complex composed of at least GON7, TP53RK, TPRKB, OSGEP and LAGE3; the whole complex dimerizes. Ubiquitous.

It localises to the cytoplasm. Its subcellular location is the nucleus. In terms of biological role, component of the EKC/KEOPS complex that is required for the formation of a threonylcarbamoyl group on adenosine at position 37 (t(6)A37) in tRNAs that read codons beginning with adenine. The complex is probably involved in the transfer of the threonylcarbamoyl moiety of threonylcarbamoyl-AMP (TC-AMP) to the N6 group of A37. LAGE3 functions as a dimerization module for the complex. This chain is EKC/KEOPS complex subunit LAGE3, found in Homo sapiens (Human).